The primary structure comprises 590 residues: Cell division protein FtsZ 1 (590 aa).

GTP is bound by residues 24-28 (GGGGN), 111-113 (GTG), E142, R146, and D190. Disordered stretches follow at residues 346-372 (AAVP…QPLQ) and 524-590 (EATN…RQSS). The segment covering 534 to 546 (AAAPSAASQQRRP) has biased composition (low complexity). Over residues 559–576 (GQLDDHGRAAPQMRSHED) the composition is skewed to basic and acidic residues.

Belongs to the FtsZ family. As to quaternary structure, homodimer. Polymerizes to form a dynamic ring structure in a strictly GTP-dependent manner. Interacts directly with several other division proteins.

It is found in the cytoplasm. Its function is as follows. Essential cell division protein that forms a contractile ring structure (Z ring) at the future cell division site. The regulation of the ring assembly controls the timing and the location of cell division. One of the functions of the FtsZ ring is to recruit other cell division proteins to the septum to produce a new cell wall between the dividing cells. Binds GTP and shows GTPase activity. This is Cell division protein FtsZ 1 from Rhizobium meliloti (strain 1021) (Ensifer meliloti).